Reading from the N-terminus, the 1463-residue chain is DNA polymerase III PolC-type (1463 aa).

In terms of domain architecture, Exonuclease spans 425-581 (YVVFDVETTG…YDAEATGRLL (157 aa)).

This sequence belongs to the DNA polymerase type-C family. PolC subfamily.

Its subcellular location is the cytoplasm. The catalysed reaction is DNA(n) + a 2'-deoxyribonucleoside 5'-triphosphate = DNA(n+1) + diphosphate. Required for replicative DNA synthesis. This DNA polymerase also exhibits 3' to 5' exonuclease activity. This is DNA polymerase III PolC-type from Streptococcus pneumoniae serotype 2 (strain D39 / NCTC 7466).